A 376-amino-acid polypeptide reads, in one-letter code: UDP-N-acetylglucosamine--N-acetylmuramyl-(pentapeptide) pyrophosphoryl-undecaprenol N-acetylglucosamine transferase (376 aa).

UDP-N-acetyl-alpha-D-glucosamine-binding positions include 12–14 (TGG), Asn-125, Arg-165, Ser-197, and Gln-296.

Belongs to the glycosyltransferase 28 family. MurG subfamily.

The protein resides in the cell inner membrane. It carries out the reaction di-trans,octa-cis-undecaprenyl diphospho-N-acetyl-alpha-D-muramoyl-L-alanyl-D-glutamyl-meso-2,6-diaminopimeloyl-D-alanyl-D-alanine + UDP-N-acetyl-alpha-D-glucosamine = di-trans,octa-cis-undecaprenyl diphospho-[N-acetyl-alpha-D-glucosaminyl-(1-&gt;4)]-N-acetyl-alpha-D-muramoyl-L-alanyl-D-glutamyl-meso-2,6-diaminopimeloyl-D-alanyl-D-alanine + UDP + H(+). It functions in the pathway cell wall biogenesis; peptidoglycan biosynthesis. Its function is as follows. Cell wall formation. Catalyzes the transfer of a GlcNAc subunit on undecaprenyl-pyrophosphoryl-MurNAc-pentapeptide (lipid intermediate I) to form undecaprenyl-pyrophosphoryl-MurNAc-(pentapeptide)GlcNAc (lipid intermediate II). This chain is UDP-N-acetylglucosamine--N-acetylmuramyl-(pentapeptide) pyrophosphoryl-undecaprenol N-acetylglucosamine transferase, found in Protochlamydia amoebophila (strain UWE25).